The chain runs to 85 residues: Small ribosomal subunit protein uS17 (85 aa).

It belongs to the universal ribosomal protein uS17 family. As to quaternary structure, part of the 30S ribosomal subunit.

Its function is as follows. One of the primary rRNA binding proteins, it binds specifically to the 5'-end of 16S ribosomal RNA. The protein is Small ribosomal subunit protein uS17 of Trichlorobacter lovleyi (strain ATCC BAA-1151 / DSM 17278 / SZ) (Geobacter lovleyi).